Reading from the N-terminus, the 88-residue chain is MTETELFKEGLNLMFSGMGFVIIFLLILIWAIGIVSKLINTFFPEPIPVAQAKKTVTPTQSAVVDDIERLRPVIVAAIAHHRRTQGLN.

Residues 13 to 35 (LMFSGMGFVIIFLLILIWAIGIV) traverse the membrane as a helical segment.

Belongs to the OadG family. Heterotrimer of an alpha, a beta and a gamma subunit. It depends on Na(+) as a cofactor.

The protein resides in the cell membrane. It catalyses the reaction oxaloacetate + 2 Na(+)(in) + H(+) = pyruvate + 2 Na(+)(out) + CO2. Catalyzes the decarboxylation of oxaloacetate coupled to Na(+) translocation. The sequence is that of Probable oxaloacetate decarboxylase gamma chain from Mannheimia succiniciproducens (strain KCTC 0769BP / MBEL55E).